Reading from the N-terminus, the 525-residue chain is uncharacterized protein (525 aa).

The segment at residues 21-48 is a DNA-binding region (zn(2)-C6 fungal-type); the sequence is CLICRSMRKKCDEVHPQCGRCLKAGKQC.

Its subcellular location is the cytoplasm. It is found in the nucleus. This is an uncharacterized protein from Schizosaccharomyces pombe (strain 972 / ATCC 24843) (Fission yeast).